The sequence spans 426 residues: Glutamate-1-semialdehyde 2,1-aminomutase (426 aa).

Lys-265 is modified (N6-(pyridoxal phosphate)lysine).

It belongs to the class-III pyridoxal-phosphate-dependent aminotransferase family. HemL subfamily. Homodimer. The cofactor is pyridoxal 5'-phosphate.

It localises to the cytoplasm. The enzyme catalyses (S)-4-amino-5-oxopentanoate = 5-aminolevulinate. The protein operates within porphyrin-containing compound metabolism; protoporphyrin-IX biosynthesis; 5-aminolevulinate from L-glutamyl-tRNA(Glu): step 2/2. The chain is Glutamate-1-semialdehyde 2,1-aminomutase from Shigella flexneri serotype 5b (strain 8401).